A 95-amino-acid chain; its full sequence is MSLDKATVAKIAHLARIRVPEEEQEHLAQELNGILGWVEQLGEVDTDGVQPITSNVAQTLRRRQDVVTDGGYPEKVVANAPEGAEHFFAVPKVVE.

This sequence belongs to the GatC family. In terms of assembly, heterotrimer of A, B and C subunits.

The enzyme catalyses L-glutamyl-tRNA(Gln) + L-glutamine + ATP + H2O = L-glutaminyl-tRNA(Gln) + L-glutamate + ADP + phosphate + H(+). It carries out the reaction L-aspartyl-tRNA(Asn) + L-glutamine + ATP + H2O = L-asparaginyl-tRNA(Asn) + L-glutamate + ADP + phosphate + 2 H(+). Functionally, allows the formation of correctly charged Asn-tRNA(Asn) or Gln-tRNA(Gln) through the transamidation of misacylated Asp-tRNA(Asn) or Glu-tRNA(Gln) in organisms which lack either or both of asparaginyl-tRNA or glutaminyl-tRNA synthetases. The reaction takes place in the presence of glutamine and ATP through an activated phospho-Asp-tRNA(Asn) or phospho-Glu-tRNA(Gln). This chain is Aspartyl/glutamyl-tRNA(Asn/Gln) amidotransferase subunit C, found in Rhodospirillum centenum (strain ATCC 51521 / SW).